An 829-amino-acid polypeptide reads, in one-letter code: Disintegrin and metalloproteinase domain-containing protein 23 (829 aa).

The N-terminal stretch at 1–55 (MKPPGSISRRPTLTGCSLPGASCGPGRCPAGPVPARAPPCRLLLVLLLLPALATS) is a signal peptide. Positions 56-283 (SRPRARGAAA…ELQWLRRRKR (228 aa)) are excised as a propeptide. Asparagine 72, asparagine 92, asparagine 97, and asparagine 260 each carry an N-linked (GlcNAc...) asparagine glycan. Residues 284–789 (AVNPSRGVFE…EGPKGPSATN (506 aa)) are Extracellular-facing. The region spanning 296–493 (KYLELMIVND…GGGACLFNRP (198 aa)) is the Peptidase M12B domain. 3 cysteine pairs are disulfide-bonded: cysteine 405–cysteine 488, cysteine 447–cysteine 472, and cysteine 449–cysteine 456. The Disintegrin domain maps to 499 to 585 (PTECGNGYVE…QCPPNLHKQD (87 aa)). N-linked (GlcNAc...) asparagine glycans are attached at residues asparagine 544 and asparagine 545. Cysteine 557 and cysteine 577 form a disulfide bridge. N-linked (GlcNAc...) asparagine glycans are attached at residues asparagine 661 and asparagine 729. Positions 729-766 (NMSSCPLDSRGKVCSGHGVCSNEATCICDFTWAGTDCS) constitute an EGF-like domain. 3 disulfides stabilise this stretch: cysteine 733–cysteine 748, cysteine 742–cysteine 754, and cysteine 756–cysteine 765. The chain crosses the membrane as a helical span at residues 790–810 (LIIGSIAGAILVAAIVLGGTG). The Cytoplasmic portion of the chain corresponds to 811–829 (WGFKNVKKRRFDPTQQGPI).

In terms of assembly, can bind to LGI1 and LGI4. Brain specific.

It localises to the cell membrane. Its subcellular location is the secreted. May play a role in cell-cell and cell-matrix interactions. This is a non-catalytic metalloprotease-like protein. The polypeptide is Disintegrin and metalloproteinase domain-containing protein 23 (Adam23) (Mus musculus (Mouse)).